Here is a 187-residue protein sequence, read N- to C-terminus: Adenylate kinase (187 aa).

11–16 (GAGKGT) contacts ATP. Residues 31–60 (STGDILREAVKNQTAMGIEAKRYMDAGDLV) form an NMP region. AMP is bound by residues Thr32, Arg37, 58–60 (DLV), 86–89 (GFPR), and Gln93. The tract at residues 127-137 (GRAEIEGRADD) is LID. Arg128 serves as a coordination point for ATP. AMP is bound by residues Arg134 and Arg145. Gly173 lines the ATP pocket.

Belongs to the adenylate kinase family. As to quaternary structure, monomer.

Its subcellular location is the cytoplasm. It catalyses the reaction AMP + ATP = 2 ADP. The protein operates within purine metabolism; AMP biosynthesis via salvage pathway; AMP from ADP: step 1/1. Its function is as follows. Catalyzes the reversible transfer of the terminal phosphate group between ATP and AMP. Plays an important role in cellular energy homeostasis and in adenine nucleotide metabolism. This is Adenylate kinase from Leptospira interrogans serogroup Icterohaemorrhagiae serovar copenhageni (strain Fiocruz L1-130).